We begin with the raw amino-acid sequence, 1382 residues long: Hepatocyte growth factor receptor (1382 aa).

A signal peptide spans 1–24; the sequence is MKAPAVLAPGILVLLFTLVPRSHG. Topologically, residues 25–933 are extracellular; sequence ECKEALVKSE…VIVQPDQNFM (909 aa). One can recognise a Sema domain in the interval 27-516; the sequence is KEALVKSEMN…TGNKITKIPL (490 aa). Residue Asn-45 is glycosylated (N-linked (GlcNAc...) asparagine). Cystine bridges form between Cys-95-Cys-101, Cys-98-Cys-160, Cys-133-Cys-141, and Cys-173-Cys-176. N-linked (GlcNAc...) asparagine glycosylation is present at Asn-106. N-linked (GlcNAc...) asparagine glycans are attached at residues Asn-203 and Asn-359. Intrachain disulfides connect Cys-299–Cys-364 and Cys-386–Cys-398. Residues Asn-400 and Asn-406 are each glycosylated (N-linked (GlcNAc...) asparagine). Disulfide bonds link Cys-521/Cys-539, Cys-527/Cys-562, Cys-530/Cys-546, and Cys-542/Cys-552. IPT/TIG domains follow at residues 564-656, 658-740, and 743-837; these read PAIY…FSYV, PVIT…FSYR, and PIVD…LTYV. Thr-583 carries an O-linked (Man) threonine glycan. Asn-608, Asn-614, and Asn-636 each carry an N-linked (GlcNAc...) asparagine glycan. 2 O-linked (Man) threonine glycosylation sites follow: Thr-677 and Thr-762. 2 N-linked (GlcNAc...) asparagine glycosylation sites follow: Asn-786 and Asn-880. The helical transmembrane segment at 934–956 threads the bilayer; the sequence is GLIVGGVSISIILLLLLGLFLWL. The Cytoplasmic segment spans residues 957–1382; it reads KKKKRIKDLG…QDNVDGTVDT (426 aa). Position 967 is a phosphoserine (Ser-967). Thr-978 carries the phosphothreonine modification. Phosphoserine occurs at positions 991, 998, and 1001. At Tyr-1004 the chain carries Phosphotyrosine. The region spanning 1079–1346 is the Protein kinase domain; it reads VHFSEVIGRG…RISTIFSTFI (268 aa). ATP-binding positions include 1085–1093 and Lys-1111; that span reads IGRGHFGCV. Asp-1205 functions as the Proton acceptor in the catalytic mechanism. An interaction with RANBP9 region spans residues 1213–1382; it reads LDEKFTVKVA…QDNVDGTVDT (170 aa). Residue Tyr-1231 is modified to Phosphotyrosine. Phosphotyrosine; by autocatalysis occurs at positions 1235 and 1236. Residue Thr-1290 is modified to Phosphothreonine. The interval 1321–1360 is interaction with MUC20; the sequence is WHPKAEMRPSFSELVSRISTIFSTFIGEHYVHVNATYVNV. A phosphotyrosine; by autocatalysis mark is found at Tyr-1350 and Tyr-1357. A Phosphotyrosine modification is found at Tyr-1366.

The protein belongs to the protein kinase superfamily. Tyr protein kinase family. In terms of assembly, heterodimer made of an alpha chain (50 kDa) and a beta chain (145 kDa) which are disulfide linked. Binds PLXNB1. Interacts when phosphorylated with downstream effectors including STAT3, PIK3R1, SRC, PCLG1, GRB2 and GAB1. Interacts with SPSB1, SPSB2 and SPSB4. Interacts with INPP5D/SHIP1. When phosphorylated at Tyr-1357, interacts with INPPL1/SHIP2. Interacts with RANBP9 and RANBP10, as well as SPSB1, SPSB2, SPSB3 and SPSB4. SPSB1 binding occurs in the presence and in the absence of HGF, however HGF treatment has a positive effect on this interaction. Interacts with MUC20; prevents interaction with GRB2 and suppresses hepatocyte growth factor-induced cell proliferation. Interacts with GRB10. Interacts with PTPN1 and PTPN2. Interacts with HSP90AA1 and HSP90AB1; the interaction suppresses MET kinase activity. Interacts with tensin TNS3. Interacts (when phosphorylated) with tensin TNS4 (via SH2 domain); the interaction increases MET protein stability by inhibiting MET endocytosis and subsequent lysosomal degradation. Post-translationally, autophosphorylated in response to ligand binding on Tyr-1235 and Tyr-1236 in the kinase domain leading to further phosphorylation of Tyr-1350 and Tyr-1357 in the C-terminal multifunctional docking site. Dephosphorylated by PTPRJ at Tyr-1350 and Tyr-1366. Dephosphorylated by PTPN1 and PTPN2. In terms of processing, ubiquitinated. Ubiquitination by CBL regulates the receptor stability and activity through proteasomal degradation. O-mannosylation of IPT/TIG domains by TMEM260 is required for protein maturation. O-mannosylated residues are composed of single mannose glycans that are not elongated or modified.

It localises to the membrane. The enzyme catalyses L-tyrosyl-[protein] + ATP = O-phospho-L-tyrosyl-[protein] + ADP + H(+). Its activity is regulated as follows. In its inactive state, the C-terminal tail interacts with the catalytic domain and inhibits the kinase activity. Upon ligand binding, the C-terminal tail is displaced and becomes phosphorylated, thus increasing the kinase activity. Its function is as follows. Receptor tyrosine kinase that transduces signals from the extracellular matrix into the cytoplasm by binding to hepatocyte growth factor/HGF ligand. Regulates many physiological processes including proliferation, scattering, morphogenesis and survival. Ligand binding at the cell surface induces autophosphorylation of MET on its intracellular domain that provides docking sites for downstream signaling molecules. Following activation by ligand, interacts with the PI3-kinase subunit PIK3R1, PLCG1, SRC, GRB2, STAT3 or the adapter GAB1. Recruitment of these downstream effectors by MET leads to the activation of several signaling cascades including the RAS-ERK, PI3 kinase-AKT, or PLCgamma-PKC. The RAS-ERK activation is associated with the morphogenetic effects while PI3K/AKT coordinates prosurvival effects. During embryonic development, MET signaling plays a role in gastrulation, development and migration of muscles and neuronal precursors, angiogenesis and kidney formation. In adults, participates in wound healing as well as organ regeneration and tissue remodeling. Also promotes differentiation and proliferation of hematopoietic cells. The chain is Hepatocyte growth factor receptor (MET) from Oryctolagus cuniculus (Rabbit).